The following is a 565-amino-acid chain: Dihydroxy-acid dehydratase (565 aa).

Asp-80 is a Mg(2+) binding site. A [2Fe-2S] cluster-binding site is contributed by Cys-121. Mg(2+)-binding residues include Asp-122 and Lys-123. Residue Lys-123 is modified to N6-carboxylysine. Cys-194 is a [2Fe-2S] cluster binding site. A Mg(2+)-binding site is contributed by Glu-447. Ser-473 (proton acceptor) is an active-site residue.

This sequence belongs to the IlvD/Edd family. As to quaternary structure, homodimer. The cofactor is [2Fe-2S] cluster. It depends on Mg(2+) as a cofactor.

It catalyses the reaction (2R)-2,3-dihydroxy-3-methylbutanoate = 3-methyl-2-oxobutanoate + H2O. It carries out the reaction (2R,3R)-2,3-dihydroxy-3-methylpentanoate = (S)-3-methyl-2-oxopentanoate + H2O. It participates in amino-acid biosynthesis; L-isoleucine biosynthesis; L-isoleucine from 2-oxobutanoate: step 3/4. The protein operates within amino-acid biosynthesis; L-valine biosynthesis; L-valine from pyruvate: step 3/4. Functions in the biosynthesis of branched-chain amino acids. Catalyzes the dehydration of (2R,3R)-2,3-dihydroxy-3-methylpentanoate (2,3-dihydroxy-3-methylvalerate) into 2-oxo-3-methylpentanoate (2-oxo-3-methylvalerate) and of (2R)-2,3-dihydroxy-3-methylbutanoate (2,3-dihydroxyisovalerate) into 2-oxo-3-methylbutanoate (2-oxoisovalerate), the penultimate precursor to L-isoleucine and L-valine, respectively. The protein is Dihydroxy-acid dehydratase of Pelodictyon phaeoclathratiforme (strain DSM 5477 / BU-1).